A 656-amino-acid polypeptide reads, in one-letter code: CXXC-type zinc finger protein 1 (656 aa).

N-acetylmethionine is present on Met1. The segment covering 1 to 14 has biased composition (acidic residues); the sequence is MEGDGSDPEPPDAG. Residues 1–20 form a disordered region; sequence MEGDGSDPEPPDAGEDSKSE. Phosphoserine occurs at positions 6 and 19. The segment at 28–76 adopts a PHD-type zinc-finger fold; it reads YCICRKPDINCFMIGCDNCNEWFHGDCIRITEKMAKAIREWYCRECREK. The segment at 84–162 is disordered; sequence YRHKKSRERD…QHHQQQQQQI (79 aa). Residues 90–120 show a composition bias toward basic and acidic residues; that stretch reads RERDGNERDSSEPRDEGGGRKRPVPDPDLQR. Position 124 is a phosphoserine (Ser124). Residues 160-209 form a CXXC-type zinc finger; the sequence is QQIKRSARMCGECEACRRTEDCGHCDFCRDMKKFGGPNKIRQKCRLRQCQ. Zn(2+) contacts are provided by Cys169, Cys172, Cys175, Cys181, Cys184, Cys187, Cys203, and Cys208. Disordered regions lie at residues 219–287 and 311–373; these read FPSS…LPLD and EESP…ASLP. Ser224 is subject to Phosphoserine. Thr227 carries the post-translational modification Phosphothreonine. A compositionally biased stretch (low complexity) spans 239–249; that stretch reads LPTQQQPQPSQ. Residue Lys250 forms a Glycyl lysine isopeptide (Lys-Gly) (interchain with G-Cter in SUMO2) linkage. The span at 321 to 334 shows a compositional bias: basic residues; it reads RKRAVKVKHVKRRE. A compositionally biased stretch (basic and acidic residues) spans 335–345; it reads KKSEKKKEERY. The segment covering 346 to 358 has biased composition (basic residues); it reads KRHRQKQKHKDKW. Over residues 359–368 the composition is skewed to basic and acidic residues; it reads KHPERADAKD. Residues 422–474 are a coiled coil; the sequence is AEEHGKKLLERIRREQQSARTRLQEMERRFHELEAIILRAKQQAVREDEESNE.

As to quaternary structure, component of the SET1 complex, at least composed of the catalytic subunit (SETD1A or SETD1B), WDR5, WDR82, RBBP5, ASH2L/ASH2, CXXC1/CFP1 HCFC1 and DPY30. Interacts with SETD1A. Interacts with ZNF335. Interacts with PRDM9; this interaction does not link PRDM9-activated recombination hotspot sites with DSB machinery and is not required for the hotspot recognition pathway. Interacts with histone H3K4me3. May be regulated by proteolysis. Ubiquitous.

Its subcellular location is the nucleus speckle. It localises to the nucleus. Transcriptional activator that exhibits a unique DNA binding specificity for CpG unmethylated motifs with a preference for CpGG. The sequence is that of CXXC-type zinc finger protein 1 (CXXC1) from Homo sapiens (Human).